Here is a 114-residue protein sequence, read N- to C-terminus: UPF0757 protein YmgG (114 aa).

It belongs to the UPF0757 family.

The sequence is that of UPF0757 protein YmgG from Shigella flexneri.